A 204-amino-acid chain; its full sequence is LexA repressor (204 aa).

A DNA-binding region (H-T-H motif) is located at residues 28–48 (RAEIANRLGFKSANAAEEHLK). Residues serine 121 and lysine 158 each act as for autocatalytic cleavage activity in the active site.

This sequence belongs to the peptidase S24 family. Homodimer.

The enzyme catalyses Hydrolysis of Ala-|-Gly bond in repressor LexA.. Represses a number of genes involved in the response to DNA damage (SOS response), including recA and lexA. In the presence of single-stranded DNA, RecA interacts with LexA causing an autocatalytic cleavage which disrupts the DNA-binding part of LexA, leading to derepression of the SOS regulon and eventually DNA repair. The polypeptide is LexA repressor (Shewanella frigidimarina (strain NCIMB 400)).